The primary structure comprises 269 residues: Interleukin-1 beta (269 aa).

Residues 1–116 constitute a propeptide, removed in mature form; by CASP1; sequence MAEVPELASE…TWDNEAYVHD (116 aa). An Involved in interaction with TMED10 C-terminus motif is present at residues 228-241; it reads FESAQFPNWYISTS.

This sequence belongs to the IL-1 family. In terms of assembly, monomer. In its precursor form, weakly interacts with full-length MEFV; the mature cytokine does not interact at all. Interacts with integrins ITGAV:ITGBV and ITGA5:ITGB1; integrin-binding is required for IL1B signaling. Interacts with cargo receptor TMED10; the interaction is direct and is required for the secretion of IL1B mature form. Interacts with HSP90AB1; the interaction facilitates cargo translocation into the ERGIC. Interacts with HSP90B1; the interaction facilitates cargo translocation into the ERGIC. In terms of processing, activation of the IL1B precursor involves a CASP1-catalyzed proteolytic cleavage. Processing and secretion are temporarily associated. (Microbial infection) Cleavage by S.pyogenes cysteine protease SpeB promotes its activation independently of CASP1. Expressed in activated monocytes/macrophages (at protein level).

It is found in the cytoplasm. Its subcellular location is the cytosol. The protein localises to the secreted. The protein resides in the lysosome. It localises to the extracellular exosome. (Microbial infection) Cleavage by S.pyogenes cysteine protease SpeB promotes its activation independently of CASP1. SpeB-mediated maturation of IL1B plays a dual role depending on infection site: while IL1B inflammatory response prevents bacterial growth during invasive skin infections, it promotes streptococcal infection of the nasopharynx by disrupting colonization resistance mediated by the microbiota. Potent pro-inflammatory cytokine. Initially discovered as the major endogenous pyrogen, induces prostaglandin synthesis, neutrophil influx and activation, T-cell activation and cytokine production, B-cell activation and antibody production, and fibroblast proliferation and collagen production. Promotes Th17 differentiation of T-cells. Synergizes with IL12/interleukin-12 to induce IFNG synthesis from T-helper 1 (Th1) cells. Plays a role in angiogenesis by inducing VEGF production synergistically with TNF and IL6. Involved in transduction of inflammation downstream of pyroptosis: its mature form is specifically released in the extracellular milieu by passing through the gasdermin-D (GSDMD) pore. Acts as a sensor of S.pyogenes infection in skin: cleaved and activated by pyogenes SpeB protease, leading to an inflammatory response that prevents bacterial growth during invasive skin infection. In Homo sapiens (Human), this protein is Interleukin-1 beta.